Here is a 376-residue protein sequence, read N- to C-terminus: Ribosomal RNA large subunit methyltransferase G (376 aa).

It belongs to the methyltransferase superfamily. RlmG family.

Its subcellular location is the cytoplasm. It catalyses the reaction guanosine(1835) in 23S rRNA + S-adenosyl-L-methionine = N(2)-methylguanosine(1835) in 23S rRNA + S-adenosyl-L-homocysteine + H(+). In terms of biological role, specifically methylates the guanine in position 1835 (m2G1835) of 23S rRNA. The polypeptide is Ribosomal RNA large subunit methyltransferase G (Klebsiella pneumoniae subsp. pneumoniae (strain ATCC 700721 / MGH 78578)).